The chain runs to 75 residues: ATP synthase subunit c (75 aa).

Transmembrane regions (helical) follow at residues 8 to 28 (FLGI…VSNI) and 54 to 74 (AALT…LIFV).

Belongs to the ATPase C chain family. In terms of assembly, F-type ATPases have 2 components, F(1) - the catalytic core - and F(0) - the membrane proton channel. F(1) has five subunits: alpha(3), beta(3), gamma(1), delta(1), epsilon(1). F(0) has three main subunits: a(1), b(2) and c(10-14). The alpha and beta chains form an alternating ring which encloses part of the gamma chain. F(1) is attached to F(0) by a central stalk formed by the gamma and epsilon chains, while a peripheral stalk is formed by the delta and b chains.

Its subcellular location is the cell inner membrane. Its function is as follows. F(1)F(0) ATP synthase produces ATP from ADP in the presence of a proton or sodium gradient. F-type ATPases consist of two structural domains, F(1) containing the extramembraneous catalytic core and F(0) containing the membrane proton channel, linked together by a central stalk and a peripheral stalk. During catalysis, ATP synthesis in the catalytic domain of F(1) is coupled via a rotary mechanism of the central stalk subunits to proton translocation. Key component of the F(0) channel; it plays a direct role in translocation across the membrane. A homomeric c-ring of between 10-14 subunits forms the central stalk rotor element with the F(1) delta and epsilon subunits. In Neorickettsia sennetsu (strain ATCC VR-367 / Miyayama) (Ehrlichia sennetsu), this protein is ATP synthase subunit c.